The following is a 622-amino-acid chain: Presenilin-A (622 aa).

A compositionally biased stretch (basic and acidic residues) spans 1-16; the sequence is MKENEDEINKTDEKYK. Disordered stretches follow at residues 1 to 65 and 132 to 160; these read MKEN…NLEN and VSEQ…DETE. Over 1 to 168 the chain is Cytoplasmic; the sequence is MKENEDEINK…TEVPELVDYS (168 aa). A compositionally biased stretch (low complexity) spans 21-62; the sequence is SNNGNNKNKNNNNNNNNNNNNNNNNNNNNNNNNNNNNNGNSN. Over residues 147 to 160 the composition is skewed to acidic residues; that stretch reads DLDEDDDDDDDETE. A helical membrane pass occupies residues 169-189; it reads EMIVSILYPVCITMVIVVLAI. Over 190–227 the chain is Lumenal; it reads RAISSSTSKNSQIVEISNDNSGGNGDSSSGADKMVFDS. A helical transmembrane segment spans residues 228–248; that stretch reads VVNSLIFLAVIILSTTIMVVL. At 249-265 the chain is on the cytoplasmic side; sequence YKFKLMKALYAWLMGTS. A helical transmembrane segment spans residues 266 to 286; that stretch reads ILLLGVFGGFLFLILLAYLNL. Residues 287–289 lie on the Lumenal side of the membrane; that stretch reads GLD. A helical membrane pass occupies residues 290 to 310; the sequence is YVTFVIVVWNFSVGGIVCIFW. A topological domain (cytoplasmic) is located at residue Tyr311. A helical transmembrane segment spans residues 312 to 332; sequence SPKLLNQGYLISISVLMALFF. The Lumenal portion of the chain corresponds to 333-341; the sequence is SRLPDWTTW. A helical membrane pass occupies residues 342–362; the sequence is GILSIVSIYDIFAVLCPGGPL. Asp351 is a catalytic residue. The Cytoplasmic segment spans residues 363–538; that stretch reads RILIETAQKR…SYVKPKQSIR (176 aa). The disordered stretch occupies residues 419 to 477; the sequence is NNNNNEDENKNNTEDGNNNNNKNKNNNNNNNNRIENENGAENSSENGSITPPPTIPNFI. Positions 432-466 are enriched in low complexity; the sequence is EDGNNNNNKNKNNNNNNNNRIENENGAENSSENGS. The helical transmembrane segment at 539–559 threads the bilayer; sequence LGLGDFVFYSVLIGKAASYQI. Residue Asp543 is part of the active site. At 560–562 the chain is on the lumenal side; the sequence is TTV. Residues 563–583 traverse the membrane as a helical segment; that stretch reads FTVFIAIITGLFLTLILLAVF. Residues 584–588 are Cytoplasmic-facing; sequence RRALP. The PAL motif lies at 588–590; the sequence is PAL. Residues 589 to 609 constitute an intramembrane region (helical); it reads ALPMSIIFGIIVFFLTFKILI. Topologically, residues 610–622 are cytoplasmic; sequence QYIYFLGENQIFV.

Belongs to the peptidase A22A family. Homodimer. Component of the gamma-secretase complex, a complex composed of a presenilin homodimer, nicastrin, aph1 and pen2.

It localises to the endoplasmic reticulum membrane. It is found in the golgi apparatus membrane. Functionally, probable catalytic subunit of the gamma-secretase complex, an endoprotease complex that catalyzes the intramembrane cleavage of integral membrane proteins such as Notch receptors. Requires the other members of the gamma-secretase complex to have a protease activity. The chain is Presenilin-A (psenA) from Dictyostelium discoideum (Social amoeba).